The sequence spans 580 residues: Acyl-coenzyme A synthetase ACSM4, mitochondrial (580 aa).

A mitochondrion-targeting transit peptide spans 1–22 (MKIFFRYQTFRFIWLTKPPGRR). ATP-binding positions include 229–237 (TSGTTGFPK), 368–373 (EGYGQT), Asp455, Arg470, and Lys566.

It belongs to the ATP-dependent AMP-binding enzyme family. Requires Mg(2+) as cofactor. Mn(2+) serves as cofactor.

Its subcellular location is the mitochondrion. The enzyme catalyses a medium-chain fatty acid + ATP + CoA = a medium-chain fatty acyl-CoA + AMP + diphosphate. It catalyses the reaction hexanoate + ATP + CoA = hexanoyl-CoA + AMP + diphosphate. It carries out the reaction octanoate + ATP + CoA = octanoyl-CoA + AMP + diphosphate. The catalysed reaction is decanoate + ATP + CoA = decanoyl-CoA + AMP + diphosphate. The enzyme catalyses dodecanoate + ATP + CoA = dodecanoyl-CoA + AMP + diphosphate. Its function is as follows. Catalyzes the activation of fatty acids by CoA to produce an acyl-CoA, the first step in fatty acid metabolism. Capable of activating medium-chain fatty acids with a preference for C6-12 fatty acids. This chain is Acyl-coenzyme A synthetase ACSM4, mitochondrial (ACSM4), found in Homo sapiens (Human).